The sequence spans 200 residues: Small ribosomal subunit protein uS4 (200 aa).

The tract at residues 21-42 (GTGKELQKRPYPPGQHGPGQRR) is disordered. Residues 92 to 155 (SRLDNLVYRL…RNLQVIKEAI (64 aa)) form the S4 RNA-binding domain.

Belongs to the universal ribosomal protein uS4 family. Part of the 30S ribosomal subunit. Contacts protein S5. The interaction surface between S4 and S5 is involved in control of translational fidelity.

One of the primary rRNA binding proteins, it binds directly to 16S rRNA where it nucleates assembly of the body of the 30S subunit. Its function is as follows. With S5 and S12 plays an important role in translational accuracy. The polypeptide is Small ribosomal subunit protein uS4 (Geobacillus thermodenitrificans (strain NG80-2)).